Here is a 175-residue protein sequence, read N- to C-terminus: Gamma-crystallin A (175 aa).

Beta/gamma crystallin 'Greek key' domains follow at residues 2–40 (GKIT…RVDV) and 41–83 (HSWF…RLIP). The connecting peptide stretch occupies residues 84–88 (QHTGT). Beta/gamma crystallin 'Greek key' domains follow at residues 89-129 (FRMR…RVLE) and 130-172 (GSWV…RRVM).

Belongs to the beta/gamma-crystallin family.

Crystallins are the dominant structural components of the vertebrate eye lens. This chain is Gamma-crystallin A (CRYGA), found in Bos taurus (Bovine).